A 417-amino-acid chain; its full sequence is V-set and immunoglobulin domain-containing protein 8 (417 aa).

An N-terminal signal peptide occupies residues 1-21; that stretch reads MGVRGALHLLLVCLSPALLSA. 2 Ig-like V-type domains span residues 22–140 and 145–256; these read VRIN…VIVT and PAVP…VKVS. The Extracellular segment spans residues 22 to 262; that stretch reads VRINGDGQEV…VKVSDSQRVG (241 aa). 2 disulfides stabilise this stretch: C44/C125 and C166/C238. Residues 263-283 traverse the membrane as a helical segment; it reads MIVGAVLGSLLMLACLALGIW. Residues 284–417 are Cytoplasmic-facing; it reads GLICCCCGGG…QRSCKDGLLV (134 aa).

Its subcellular location is the membrane. The sequence is that of V-set and immunoglobulin domain-containing protein 8 (Vsig8) from Mus musculus (Mouse).